Consider the following 208-residue polypeptide: Claudin-like protein ZF-A89 (208 aa).

A run of 4 helical transmembrane segments spans residues 8-28 (LLAT…CALP), 82-102 (ALVV…IAGG), 117-137 (VVVA…IPVC), and 160-180 (LGAS…GGAL).

It belongs to the claudin family.

It is found in the cell membrane. The protein localises to the cell junction. Its subcellular location is the tight junction. In terms of biological role, component of tight junction (TJ) strands. This Danio rerio (Zebrafish) protein is Claudin-like protein ZF-A89 (cldnd).